A 209-amino-acid polypeptide reads, in one-letter code: Large ribosomal subunit protein uL3 (209 aa).

The protein belongs to the universal ribosomal protein uL3 family. Part of the 50S ribosomal subunit. Forms a cluster with proteins L14 and L19.

In terms of biological role, one of the primary rRNA binding proteins, it binds directly near the 3'-end of the 23S rRNA, where it nucleates assembly of the 50S subunit. The chain is Large ribosomal subunit protein uL3 from Clostridium botulinum (strain Okra / Type B1).